We begin with the raw amino-acid sequence, 667 residues long: Transketolase 2 (667 aa).

His-25 provides a ligand contact to substrate. Thiamine diphosphate-binding positions include His-65 and 113–115 (GPL). Residue Asp-154 coordinates Mg(2+). The thiamine diphosphate site is built by Gly-155 and Asn-184. Residues Asn-184 and Ile-186 each contribute to the Mg(2+) site. His-260 contacts substrate. A thiamine diphosphate-binding site is contributed by His-260. Position 342 is an N6-acetyllysine (Lys-342). Substrate is bound by residues Arg-357 and Ser-384. Glu-410 (proton donor) is an active-site residue. Thiamine diphosphate is bound at residue Phe-436. His-460, Asp-468, and Arg-519 together coordinate substrate.

The protein belongs to the transketolase family. In terms of assembly, homodimer. Requires Mg(2+) as cofactor. The cofactor is Ca(2+). Mn(2+) serves as cofactor. It depends on Co(2+) as a cofactor. Thiamine diphosphate is required as a cofactor.

It catalyses the reaction D-sedoheptulose 7-phosphate + D-glyceraldehyde 3-phosphate = aldehydo-D-ribose 5-phosphate + D-xylulose 5-phosphate. In terms of biological role, catalyzes the reversible transfer of a two-carbon ketol group from sedoheptulose-7-phosphate to glyceraldehyde-3-phosphate, producing xylulose-5-phosphate and ribose-5-phosphate. Catalyzes the transfer of a two-carbon ketol group from a ketose donor to an aldose acceptor, via a covalent intermediate with the cofactor thiamine pyrophosphate. In Escherichia coli (strain K12), this protein is Transketolase 2.